The sequence spans 344 residues: RNA 3'-terminal phosphate cyclase (344 aa).

ATP contacts are provided by residues glutamine 103 and 283 to 287 (HLADQ). Residue histidine 308 is the Tele-AMP-histidine intermediate of the active site.

The protein belongs to the RNA 3'-terminal cyclase family. Type 1 subfamily.

The protein resides in the cytoplasm. The enzyme catalyses a 3'-end 3'-phospho-ribonucleotide-RNA + ATP = a 3'-end 2',3'-cyclophospho-ribonucleotide-RNA + AMP + diphosphate. Its function is as follows. Catalyzes the conversion of 3'-phosphate to a 2',3'-cyclic phosphodiester at the end of RNA. The mechanism of action of the enzyme occurs in 3 steps: (A) adenylation of the enzyme by ATP; (B) transfer of adenylate to an RNA-N3'P to produce RNA-N3'PP5'A; (C) and attack of the adjacent 2'-hydroxyl on the 3'-phosphorus in the diester linkage to produce the cyclic end product. The biological role of this enzyme is unknown but it is likely to function in some aspects of cellular RNA processing. This chain is RNA 3'-terminal phosphate cyclase, found in Salmonella paratyphi C (strain RKS4594).